A 144-amino-acid polypeptide reads, in one-letter code: Large ribosomal subunit protein uL15 (144 aa).

A disordered region spans residues 20–49 (GRGIGSGLGKTGGRGHKGQKSRSGGFHKVG). Residues 21-31 (RGIGSGLGKTG) are compositionally biased toward gly residues.

The protein belongs to the universal ribosomal protein uL15 family. Part of the 50S ribosomal subunit.

Its function is as follows. Binds to the 23S rRNA. This is Large ribosomal subunit protein uL15 from Neisseria gonorrhoeae (strain ATCC 700825 / FA 1090).